Reading from the N-terminus, the 283-residue chain is Diphthine methyl ester synthase (283 aa).

Residues leucine 9, aspartate 84, glycine 87, 112-113 (SI), leucine 163, methionine 221, and histidine 246 contribute to the S-adenosyl-L-methionine site.

The protein belongs to the diphthine synthase family.

It localises to the cytoplasm. It carries out the reaction 2-[(3S)-amino-3-carboxypropyl]-L-histidyl-[translation elongation factor 2] + 4 S-adenosyl-L-methionine = diphthine methyl ester-[translation elongation factor 2] + 4 S-adenosyl-L-homocysteine + 3 H(+). It functions in the pathway protein modification; peptidyl-diphthamide biosynthesis. S-adenosyl-L-methionine-dependent methyltransferase that catalyzes four methylations of the modified target histidine residue in translation elongation factor 2 (EF-2), to form an intermediate called diphthine methyl ester. The four successive methylation reactions represent the second step of diphthamide biosynthesis. The polypeptide is Diphthine methyl ester synthase (dph5) (Schizosaccharomyces pombe (strain 972 / ATCC 24843) (Fission yeast)).